The primary structure comprises 186 residues: Peptidyl-tRNA hydrolase (186 aa).

Tyr14 contributes to the tRNA binding site. The Proton acceptor role is filled by His19. TRNA contacts are provided by Phe64, Asn66, and Asn112.

It belongs to the PTH family. In terms of assembly, monomer.

The protein resides in the cytoplasm. It carries out the reaction an N-acyl-L-alpha-aminoacyl-tRNA + H2O = an N-acyl-L-amino acid + a tRNA + H(+). Functionally, hydrolyzes ribosome-free peptidyl-tRNAs (with 1 or more amino acids incorporated), which drop off the ribosome during protein synthesis, or as a result of ribosome stalling. Catalyzes the release of premature peptidyl moieties from peptidyl-tRNA molecules trapped in stalled 50S ribosomal subunits, and thus maintains levels of free tRNAs and 50S ribosomes. In Mycoplasma capricolum subsp. capricolum (strain California kid / ATCC 27343 / NCTC 10154), this protein is Peptidyl-tRNA hydrolase.